The primary structure comprises 356 residues: Mannonate dehydratase (356 aa).

The protein belongs to the mannonate dehydratase family. Fe(2+) serves as cofactor. The cofactor is Mn(2+).

The enzyme catalyses D-mannonate = 2-dehydro-3-deoxy-D-gluconate + H2O. It functions in the pathway carbohydrate metabolism; pentose and glucuronate interconversion. Catalyzes the dehydration of D-mannonate. The chain is Mannonate dehydratase from Levilactobacillus brevis (strain ATCC 367 / BCRC 12310 / CIP 105137 / JCM 1170 / LMG 11437 / NCIMB 947 / NCTC 947) (Lactobacillus brevis).